The following is a 285-amino-acid chain: Octanoyltransferase (285 aa).

Residues 50 to 277 (LRTPDELWIV…NIAQRHAGDI (228 aa)) enclose the BPL/LPL catalytic domain. Substrate is bound by residues 89–96 (RGGQVTWH), 189–191 (SLG), and 202–204 (GIA). Catalysis depends on cysteine 220, which acts as the Acyl-thioester intermediate.

This sequence belongs to the LipB family.

It is found in the cytoplasm. It catalyses the reaction octanoyl-[ACP] + L-lysyl-[protein] = N(6)-octanoyl-L-lysyl-[protein] + holo-[ACP] + H(+). It participates in protein modification; protein lipoylation via endogenous pathway; protein N(6)-(lipoyl)lysine from octanoyl-[acyl-carrier-protein]: step 1/2. Catalyzes the transfer of endogenously produced octanoic acid from octanoyl-acyl-carrier-protein onto the lipoyl domains of lipoate-dependent enzymes. Lipoyl-ACP can also act as a substrate although octanoyl-ACP is likely to be the physiological substrate. This chain is Octanoyltransferase, found in Psychrobacter cryohalolentis (strain ATCC BAA-1226 / DSM 17306 / VKM B-2378 / K5).